The chain runs to 479 residues: Beta-monoglucosyldiacylglycerol synthase (479 aa).

The next 4 helical transmembrane spans lie at 48-68 (AAVM…WVWG), 363-383 (FLLM…MALW), 389-409 (LLTP…YYGL), and 428-448 (LART…MPAV).

This sequence belongs to the glycosyltransferase 2 family. It depends on Mg(2+) as a cofactor.

It localises to the membrane. The enzyme catalyses a 1,2-diacyl-sn-glycerol + UDP-alpha-D-glucose = a 1,2-diacyl-3-O-(beta-D-glucopyranosyl)-sn-glycerol + UDP + H(+). In terms of biological role, glucosyltransferase involved in the biosynthesis of the non-bilayer-forming membrane lipid beta-monoglucosyldiacylglycerol which contributes to regulate the properties and stability of the membrane. Catalyzes the transfer of a glucosyl residue from UDP-Glc to diacylglycerol (DAG) acceptor to form the corresponding beta-glucosyl-DAG (1,2-diacyl-3-O-(beta-D-glucopyranosyl)-sn-glycerol). It can only use UDP-Glc as sugar donor. Two types of DAG (dipalmitoyl-DAG (DPDAG) and 1-oleoyl-2-palmitoyl-DAG (OPDAG)) can be used as sugar acceptors, but OPDAG is preferred. The polypeptide is Beta-monoglucosyldiacylglycerol synthase (Synechocystis sp. (strain ATCC 27184 / PCC 6803 / Kazusa)).